The primary structure comprises 413 residues: Palmitoyltransferase ZDHHC6 (413 aa).

The Cytoplasmic segment spans residues 1–24; that stretch reads MGTFCSVVKFENLQELKRLCHWGP. A helical transmembrane segment spans residues 25-45; it reads IIALGVIAICSAMAMIDSVLW. Over 46-57 the chain is Lumenal; it reads YWPLHTTGGSVN. A helical membrane pass occupies residues 58-78; sequence FIMLINWTVMILYNYFNAMFV. At 79–143 the chain is on the cytoplasmic side; the sequence is GPGFVPLGWK…NCCGYQNHAS (65 aa). The region spanning 99–149 is the DHHC domain; that stretch reads QYCKVCQAYKAPRSHHCRKCNRCVMKMDHHCPWINNCCGYQNHASFTLFLL. Catalysis depends on C129, which acts as the S-palmitoyl cysteine intermediate. Residues 144-164 traverse the membrane as a helical segment; that stretch reads FTLFLLLAPLGCIHAAFIFVM. The Lumenal portion of the chain corresponds to 165-194; the sequence is TMYTQLYNRLSFGWNTVKIDMSAARRDPLP. A helical transmembrane segment spans residues 195–215; sequence IIPFGLAAFAATLFALGLALG. The Cytoplasmic segment spans residues 216-413; the sequence is TTIAVGMLFF…QAPEGEKKNR (198 aa). Positions 313-398 constitute an SH3 domain; it reads VRSVRYKVIE…PRNCVEKCPC (86 aa). Residues C328, C329, and C343 are each lipidated (S-palmitoyl cysteine). Residues 410–413 carry the Di-lysine motif motif; it reads KKNR.

It belongs to the DHHC palmitoyltransferase family. Homooligomerizes. Interacts with SELENOK. Post-translationally, palmitoylated at 3 different sites by ZDHHC16. The combination of the different palmitoylation events strongly affects the quaternary assembly of ZDHHC6, its localization, stability and function. Palmitoylation at Cys-328 accelerates the turnover of ZDHHC6. Depalmitoylated by LYPLA2.

The protein resides in the endoplasmic reticulum membrane. It carries out the reaction L-cysteinyl-[protein] + hexadecanoyl-CoA = S-hexadecanoyl-L-cysteinyl-[protein] + CoA. The enzyme catalyses L-cysteinyl-[protein] + octadecanoyl-CoA = S-octadecanoyl-L-cysteinyl-[protein] + CoA. In terms of biological role, endoplasmic reticulum palmitoyl acyltransferase that mediates palmitoylation of proteins such as AMFR, CALX, ITPR1 and TFRC. Palmitoylates calnexin (CALX), which is required for its association with the ribosome-translocon complex and efficient folding of glycosylated proteins. Mediates palmitoylation of AMFR, promoting AMFR distribution to the peripheral endoplasmic reticulum. Together with SELENOK, palmitoylates ITPR1 in immune cells, leading to regulate ITPR1 stability and function. Stearoyltransferase that mediates stearoylation of TFRC to inhibit TFRC-mediated activation of the JNK pathway and mitochondrial fragmentation. The sequence is that of Palmitoyltransferase ZDHHC6 from Bos taurus (Bovine).